A 174-amino-acid chain; its full sequence is Eukaryotic translation elongation factor 1 epsilon-1 (174 aa).

An N-acetylalanine modification is found at alanine 2. Positions 2-56 are N-terminal; it reads AAAAELKLLEKSLGLRPGNKYSAQGERQIPVLQTNNGPSLTGLATIATHLVKQAS. Positions 50–173 constitute a GST C-terminal domain; sequence HLVKQASKEH…FIKNRLYANS (124 aa). The interval 57–63 is linker; the sequence is KEHLLGS. The interval 64 to 152 is C-terminal; that stretch reads TAEEKALVQQ…SRWFCHIQHY (89 aa). Lysine 138 carries the N6-acetyllysine modification. Positions 153–169 form a coiled coil; that stretch reads PDIRQHLSSVVFIKNRL.

Part of a multisubunit complex that groups tRNA ligases for Arg (RARS1), Asp (DARS1), Gln (QARS1), Ile (IARS1), Leu (LARS1), Lys (KARS1), Met (MARS1) the bifunctional ligase for Glu and Pro (EPRS1) and the auxiliary subunits AIMP1/p43, AIMP2/p38 and EEF1E1/p18. Can interact simultaneously with MARS1 and EPRS1. Forms a linear complex that contains MARS1, EEF1E1, EPRS1 and AIMP2 that is at the core of the multisubunit complex. Interacts with ATM and ATR. The interaction with ATM, which takes place independently of TP53, is induced by DNA damage that may occur during genotoxic stress or cell growth. The interaction with ATR is enhanced by UV irradiation.

It is found in the cytoplasm. Its subcellular location is the nucleus. Its function is as follows. Positive modulator of ATM response to DNA damage. This chain is Eukaryotic translation elongation factor 1 epsilon-1 (EEF1E1), found in Cricetulus griseus (Chinese hamster).